Consider the following 372-residue polypeptide: Enolase (372 aa).

His-95 and Glu-104 together coordinate substrate. The active-site Proton donor is the Glu-147. The Mg(2+) site is built by Asp-182, Glu-232, and Asp-257. Glu-232 and Asp-257 together coordinate substrate. Catalysis depends on Lys-282, which acts as the Proton acceptor. Residues 309–312 (SHRS) and Lys-333 each bind substrate.

Belongs to the enolase family. As to quaternary structure, homodimer. Mg(2+) is required as a cofactor.

The protein resides in the cytoplasm. The enzyme catalyses (2R)-2-phosphoglycerate = phosphoenolpyruvate + H2O. Its pathway is carbohydrate degradation; glycolysis; pyruvate from D-glyceraldehyde 3-phosphate: step 4/5. This is Enolase (ENO) from Chlamydomonas reinhardtii (Chlamydomonas smithii).